Here is a 924-residue protein sequence, read N- to C-terminus: Protein argonaute 4 (924 aa).

Disordered stretches follow at residues 1 to 37 (MDST…PPNV) and 159 to 185 (TRAN…RRPN). The segment covering 26 to 37 (LPPPPPVIPPNV) has biased composition (pro residues). Over residues 162–173 (NGNGSPNGNESP) the composition is skewed to low complexity. The PAZ domain occupies 292-408 (PVVDFLIANQ…IPLELCALVP (117 aa)). One can recognise a Piwi domain in the interval 577 to 885 (FILCVLPDKK…AAAQLGTFMK (309 aa)). The Nuclear localization signal signature appears at 584–591 (DKKNSDLY).

The protein belongs to the argonaute family. Ago subfamily. As to quaternary structure, interacts with NRPE1 (via C-terminus). Binding to NRPE1 is required for its function in RdDM. Interacts with turnip crinkle virus (TCV) capsid protein P38; this interaction inhibits probably RNA silencing ability of AGO4. Interacts with SDE3. Binds to RDM3. Binds chromatin at loci subject to transcriptional silencing. Interacts with MBD6. Expressed in embryos, mature leaves, vascular tissue of the sepals, stamens and stigma, at the tip of the style and siliques.

The protein resides in the nucleus. It localises to the nucleolus. The protein localises to the nucleoplasm. It is found in the cajal body. Its function is as follows. Together with RDM3, required for transcriptional gene silencing (TGS) by DNA methylation and repressive histone modifications (H3K9me2) of several chromatin loci. Component of the RISC complex that associate with the small interfering RNA (siRNA) pathway involved in direct cytosine methylation at endogenous DNA repeats. Forms a AGO4/NRPE1/siRNA complex in cajal body, facilitating its function in RNA-directed gene silencing of target loci. Required for CpNpG and asymmetric DNA methylation as well as histone H3 'Lys-9' methylation (H3K9me) at SUP and SN1 loci. May be not required for CpG methylation. Required for the production and maintenance of retrotransposon SN1 and Copia and ribosomal 5S 25 nucleotide siRNAs specialized in gene silencing at chromatin level. Involved in de novo methylation of FWA gene and required for the maintenance of RNA-directed DNA methylation (RdDM) triggered by inverted repeat transgenes. Interacts with miRNA miR390 and miR172, targeting respectively TAS3 and AP2 mRNAs, and mediates cleavage of miRNA targets. Associates mainly with small RNAs of 24 nucleotide in length and preferentially recruits small RNAs with a 5' terminal adenosine. Targeted by the turnip yellows virus (TuYV) protein P0 (via F-box-like domain) for probable proteasome degradation and thereby inactivating AGO4 function in RNA silencing. Required for resistance to the bacterial pathogen P.syringae. Works independently of the RdDM pathway in mediating resistance to P.syringae. RdDM is involved in viral genome methylation as an epigenetic defense against geminiviruses. The polypeptide is Protein argonaute 4 (Arabidopsis thaliana (Mouse-ear cress)).